We begin with the raw amino-acid sequence, 596 residues long: Nuclear receptor subfamily 2 group C member 2 (596 aa).

Ser19 bears the Phosphoserine; by MAPK mark. The residue at position 46 (Ser46) is a Phosphoserine. Residues Ser55 and Ser68 each carry the phosphoserine; by MAPK modification. Residue Ser98 is modified to Phosphoserine. The segment at residues 114–189 (VEYCVVCGDK…MGMKMESVQS (76 aa)) is a DNA-binding region (nuclear receptor). 2 consecutive NR C4-type zinc fingers follow at residues 117–137 (CVVC…CEGC) and 153–177 (CRSS…LKKC). Lys192 is covalently cross-linked (Glycyl lysine isopeptide (Lys-Gly) (interchain with G-Cter in SUMO2)). Ser219 carries the phosphoserine modification. Lys231 is modified (N6-acetyllysine). In terms of domain architecture, NR LBD spans 341–583 (GSIHVISRDQ…SIIPYILKME (243 aa)).

It belongs to the nuclear hormone receptor family. NR2 subfamily. In terms of assembly, homodimer; can bind DNA as homodimer. Heterodimer; binds DNA as a heterodimer with NR2C1 required for chromatin remodeling and for binding to promoter regions such as globin DR1 repeats. Interacts with NR2C2AP; the interaction represses selective NR2C2-mediated transcriptional activity. Interacts with PCAF; the interaction preferentially occurs on the non-phosphorylated form and induces NR2C2-mediated transactivation activity and does not require the ligand-binding domain. Interacts (MAPK-mediated phosphorylated form) with NRIP1; the interaction promotes repression of NR2C2-mediated activity. Interacts with NLRP10. Interacts (via ligand-binding region) with transcriptional corepressor JAZF1; the interaction promotes NR2C2-mediated transcriptional repression. In terms of processing, phosphorylation on Ser-19 and Ser-68 is an important regulator of NR2C2-mediated transcriptional activity. Phosphorylation on these residues recruits the corepressor, NRIP1, leading to transcripional repression, whereas the non-phosphorylated form preferentially recruits the coactivator, PCAF. As to expression, expressed, during embryogenesis, in perichondrium, developing glomeruli structures and tubules of kidney, as well as in intestiinal villi. Also expressed in lung and hair follicles.

Its subcellular location is the nucleus. Its function is as follows. Orphan nuclear receptor that can act as a repressor or activator of transcription. An important repressor of nuclear receptor signaling pathways such as retinoic acid receptor, retinoid X, vitamin D3 receptor, thyroid hormone receptor and estrogen receptor pathways. May regulate gene expression during the late phase of spermatogenesis. Activates transcriptional activity of LHCG and is antagonist of PPARA-mediated transactivation. Together with NR2C1, forms the core of the DRED (direct repeat erythroid-definitive) complex that represses embryonic and fetal globin transcription including that of GATA1. Binds to hormone response elements (HREs) consisting of two 5'-AGGTCA-3' half site direct repeat consensus sequences. Plays a fundamental role in early embryonic development and embryonic stem cells. Required for normal spermatogenesis and cerebellum development. Appears to be important for neurodevelopmentally regulated behavior. In Mus musculus (Mouse), this protein is Nuclear receptor subfamily 2 group C member 2 (Nr2c2).